Reading from the N-terminus, the 318-residue chain is Transaldolase (318 aa).

Lysine 132 acts as the Schiff-base intermediate with substrate in catalysis.

This sequence belongs to the transaldolase family. Type 1 subfamily. As to quaternary structure, homodimer.

It is found in the cytoplasm. The enzyme catalyses D-sedoheptulose 7-phosphate + D-glyceraldehyde 3-phosphate = D-erythrose 4-phosphate + beta-D-fructose 6-phosphate. It functions in the pathway carbohydrate degradation; pentose phosphate pathway; D-glyceraldehyde 3-phosphate and beta-D-fructose 6-phosphate from D-ribose 5-phosphate and D-xylulose 5-phosphate (non-oxidative stage): step 2/3. Transaldolase is important for the balance of metabolites in the pentose-phosphate pathway. This chain is Transaldolase, found in Shewanella piezotolerans (strain WP3 / JCM 13877).